Reading from the N-terminus, the 408-residue chain is Imidazolonepropionase (408 aa).

Residues His73 and His75 each contribute to the Fe(3+) site. Zn(2+) is bound by residues His73 and His75. Positions 82, 145, and 178 each coordinate 4-imidazolone-5-propanoate. An N-formimidoyl-L-glutamate-binding site is contributed by Tyr145. His243 is a Fe(3+) binding site. His243 is a binding site for Zn(2+). Gln246 contributes to the 4-imidazolone-5-propanoate binding site. Asp318 is a Fe(3+) binding site. Asp318 provides a ligand contact to Zn(2+). 2 residues coordinate N-formimidoyl-L-glutamate: Asn320 and Gly322. Ser323 contributes to the 4-imidazolone-5-propanoate binding site.

This sequence belongs to the metallo-dependent hydrolases superfamily. HutI family. Requires Zn(2+) as cofactor. Fe(3+) is required as a cofactor.

The protein resides in the cytoplasm. The catalysed reaction is 4-imidazolone-5-propanoate + H2O = N-formimidoyl-L-glutamate. The protein operates within amino-acid degradation; L-histidine degradation into L-glutamate; N-formimidoyl-L-glutamate from L-histidine: step 3/3. Catalyzes the hydrolytic cleavage of the carbon-nitrogen bond in imidazolone-5-propanoate to yield N-formimidoyl-L-glutamate. It is the third step in the universal histidine degradation pathway. The chain is Imidazolonepropionase from Shewanella loihica (strain ATCC BAA-1088 / PV-4).